The sequence spans 1548 residues: Multidrug resistance protein (1548 aa).

The Cytoplasmic segment spans residues 1–238; that stretch reads MVDNGHVTIA…YHVWAQILPK (238 aa). Residues 231 to 514 form the ABC transmembrane type-1 1 domain; sequence VWAQILPKLL…IPIIISSILQ (284 aa). Residues 239–256 form a helical membrane-spanning segment; the sequence is LLSDVTALMLPVLLEYFV. N-linked (GlcNAc...) asparagine glycosylation is present at asparagine 263. Transmembrane regions (helical) follow at residues 266 to 287, 349 to 367, 375 to 392, 463 to 480, and 500 to 519; these read WGWGLGLALTIFLTNVIQSCSA, VMYFWSAPLQLVLCLLLLI, VPGMAVLFVTLPLQAVIS, ATPTLVIAVVFILYHVSG, and VSFFMIPIIISSILQCFVSA. The Cytoplasmic segment spans residues 520-932; sequence KRVTAFIECP…PWSTYVAYLK (413 aa). Positions 634-855 constitute an ABC transporter 1 domain; that stretch reads VEEGDREYYQ…ALEETLRGEL (222 aa). Residue 667–674 coordinates ATP; that stretch reads GSTGSGKS. 4 helical membrane-spanning segments follow: residues 933–950, 975–993, 1051–1070, and 1072–1088; these read SCGGLEAWGCLLATFALT, TYLYVYLFIVFLEIFGSPL, GYLYLLEYFFSMCSTVIIMV, and VQPFVLVAIVPCVYSYY. Positions 940–1221 constitute an ABC transmembrane type-1 2 domain; that stretch reads WGCLLATFAL…LVRQVAMVEA (282 aa). N-linked (GlcNAc...) asparagine glycosylation is found at asparagine 1095 and asparagine 1154. 2 helical membrane-spanning segments follow: residues 1164–1182 and 1186–1205; these read LEFLSCVVTFMVAFIGVIG and GASSQNIGLISLSLTMSMTL. The Cytoplasmic segment spans residues 1206-1548; that stretch reads TETLNWLVRQ…RIVQPAVLSD (343 aa). The 236-residue stretch at 1286 to 1521 folds into the ABC transporter 2 domain; that stretch reads LVLEGVQMRY…HQSMFHSMVE (236 aa). 1320–1327 lines the ATP pocket; the sequence is GRTGSGKS.

It belongs to the ABC transporter superfamily. ABCB family. Multidrug resistance exporter (TC 3.A.1.201) subfamily.

The protein localises to the membrane. It carries out the reaction ATP + H2O + xenobioticSide 1 = ADP + phosphate + xenobioticSide 2.. The polypeptide is Multidrug resistance protein (PGPA) (Leishmania tarentolae (Sauroleishmania tarentolae)).